Consider the following 68-residue polypeptide: ATP synthase F(0) complex subunit 8 (68 aa).

The helical transmembrane segment at 8–24 threads the bilayer; it reads TWFTIIMAMLPTLYLIT. Lys-54 is modified (N6-acetyllysine; alternate). Lys-54 is subject to N6-succinyllysine; alternate. Position 57 is an N6-acetyllysine (Lys-57).

This sequence belongs to the ATPase protein 8 family. In terms of assembly, component of the ATP synthase complex composed at least of ATP5F1A/subunit alpha, ATP5F1B/subunit beta, ATP5MC1/subunit c (homooctomer), MT-ATP6/subunit a, MT-ATP8/subunit 8, ATP5ME/subunit e, ATP5MF/subunit f, ATP5MG/subunit g, ATP5MK/subunit k, ATP5MJ/subunit j, ATP5F1C/subunit gamma, ATP5F1D/subunit delta, ATP5F1E/subunit epsilon, ATP5PF/subunit F6, ATP5PB/subunit b, ATP5PD/subunit d, ATP5PO/subunit OSCP. ATP synthase complex consists of a soluble F(1) head domain (subunits alpha(3) and beta(3)) - the catalytic core - and a membrane F(0) domain - the membrane proton channel (subunits c, a, 8, e, f, g, k and j). These two domains are linked by a central stalk (subunits gamma, delta, and epsilon) rotating inside the F1 region and a stationary peripheral stalk (subunits F6, b, d, and OSCP). Interacts with PRICKLE3.

The protein resides in the mitochondrion membrane. In terms of biological role, subunit 8, of the mitochondrial membrane ATP synthase complex (F(1)F(0) ATP synthase or Complex V) that produces ATP from ADP in the presence of a proton gradient across the membrane which is generated by electron transport complexes of the respiratory chain. ATP synthase complex consist of a soluble F(1) head domain - the catalytic core - and a membrane F(1) domain - the membrane proton channel. These two domains are linked by a central stalk rotating inside the F(1) region and a stationary peripheral stalk. During catalysis, ATP synthesis in the catalytic domain of F(1) is coupled via a rotary mechanism of the central stalk subunits to proton translocation. In vivo, can only synthesize ATP although its ATP hydrolase activity can be activated artificially in vitro. Part of the complex F(0) domain. This chain is ATP synthase F(0) complex subunit 8, found in Papio hamadryas (Hamadryas baboon).